The primary structure comprises 73 residues: Translation initiation factor IF-1 (73 aa).

One can recognise an S1-like domain in the interval 1-73 (MPKKDGAIEI…SRGRIVYRYK (73 aa)).

This sequence belongs to the IF-1 family. In terms of assembly, component of the 30S ribosomal translation pre-initiation complex which assembles on the 30S ribosome in the order IF-2 and IF-3, IF-1 and N-formylmethionyl-tRNA(fMet); mRNA recruitment can occur at any time during PIC assembly.

The protein localises to the cytoplasm. Its function is as follows. One of the essential components for the initiation of protein synthesis. Stabilizes the binding of IF-2 and IF-3 on the 30S subunit to which N-formylmethionyl-tRNA(fMet) subsequently binds. Helps modulate mRNA selection, yielding the 30S pre-initiation complex (PIC). Upon addition of the 50S ribosomal subunit IF-1, IF-2 and IF-3 are released leaving the mature 70S translation initiation complex. In Frankia alni (strain DSM 45986 / CECT 9034 / ACN14a), this protein is Translation initiation factor IF-1.